The chain runs to 344 residues: Axoneme-associated protein mst101(1) (344 aa).

12 consecutive repeat copies span residues 74 to 89 (KKKCAEAAKKEKEAAE), 90 to 105 (KKKCAEAAKKEKEAAE), 106 to 121 (KKKCAEAAKKEKEAAE), 122 to 137 (KKKCAEAAKKEKEAAE), 138 to 153 (KKKCAEAAKKEKEAAE), 154 to 169 (KKKCAEAAKKEKEAAE), 170 to 185 (KKKCAEAAQKKKCAEL), 186 to 201 (AKKEQEAAEKKKCAEA), 202 to 217 (AKKEKEAAEKKKCEER), 218 to 233 (AKKEKEAAEKKKCEER), 234 to 249 (AKKEKEAAEKKKCAEA), and 250 to 265 (AKKEKEAAEKKKCAEA). Residues 74–344 (KKKCAEAAKK…AAQKKCEPKK (271 aa)) form a 17 X 16 AA approximate tandem repeats of K-K-K-C-X-E-X-A-[KQ]-K-X-X-E-X-A-X region. Residues 206 to 244 (KEAAEKKKCEERAKKEKEAAEKKKCEERAKKEKEAAEKK) form a disordered region. The stretch at 266 to 281 (AQKKKCAELAKKAKEA) is one 13; approximate repeat. Residues 282-297 (AEKKKCAKKAGEKGSK) form a 14; approximate repeat. Residues 285–315 (KKCAKKAGEKGSKQSGSDKGKKNGKKNDMKN) are compositionally biased toward basic and acidic residues. Residues 285 to 318 (KKCAKKAGEKGSKQSGSDKGKKNGKKNDMKNKCA) form a disordered region. One copy of the 15; approximate repeat lies at 298-313 (QSGSDKGKKNGKKNDM). Residues 314 to 329 (KNKCAMLAKKAKEEAL) form repeat 16. The 17; truncated repeat unit spans residues 330-344 (KKKCAAAQKKCEPKK).

In terms of tissue distribution, testis. Located in spermatocytes and spermatid bundles.

Its subcellular location is the cytoplasm. In terms of biological role, possible structural role in the sperm tail. It is associated with axonemal structures. In Drosophila hydei (Fruit fly), this protein is Axoneme-associated protein mst101(1) (mst101(1)).